We begin with the raw amino-acid sequence, 499 residues long: Maturase K (499 aa).

Belongs to the intron maturase 2 family. MatK subfamily.

The protein resides in the plastid. It is found in the chloroplast. Usually encoded in the trnK tRNA gene intron. Probably assists in splicing its own and other chloroplast group II introns. This chain is Maturase K, found in Batis maritima (Maritime saltwort).